The following is a 425-amino-acid chain: tRNA(Ile)-lysidine synthase (425 aa).

Residue 27–32 (SGGLDS) coordinates ATP.

The protein belongs to the tRNA(Ile)-lysidine synthase family.

Its subcellular location is the cytoplasm. The enzyme catalyses cytidine(34) in tRNA(Ile2) + L-lysine + ATP = lysidine(34) in tRNA(Ile2) + AMP + diphosphate + H(+). Its function is as follows. Ligates lysine onto the cytidine present at position 34 of the AUA codon-specific tRNA(Ile) that contains the anticodon CAU, in an ATP-dependent manner. Cytidine is converted to lysidine, thus changing the amino acid specificity of the tRNA from methionine to isoleucine. The polypeptide is tRNA(Ile)-lysidine synthase (Streptococcus pneumoniae (strain 70585)).